The following is a 154-amino-acid chain: Protein LOL1 (154 aa).

Putative zinc finger regions lie at residues 34–64 (QLVC…VTAV), 73–103 (QLVC…VNLA), and 111–141 (HVNC…VTSV).

It localises to the nucleus. Positive regulator of reactive oxygen-induced cell death. May be involved in the repression of the copper/zinc superoxide dismutase CSD1 and CSD2 that detoxify accumulating superoxide before the reactive oxygen species (ROS) can trigger a cell death cascade. LSD1 and LOL1 have antagonistic effects on CSD1 and CSD2 accumulation to regulate oxidative stress-induced cell death. The sequence is that of Protein LOL1 (LOL1) from Arabidopsis thaliana (Mouse-ear cress).